Reading from the N-terminus, the 341-residue chain is Ferrochelatase (341 aa).

Fe cation is bound by residues histidine 189 and glutamate 293.

The protein belongs to the ferrochelatase family.

The protein localises to the cytoplasm. The enzyme catalyses heme b + 2 H(+) = protoporphyrin IX + Fe(2+). It participates in porphyrin-containing compound metabolism; protoheme biosynthesis; protoheme from protoporphyrin-IX: step 1/1. Functionally, catalyzes the ferrous insertion into protoporphyrin IX. The chain is Ferrochelatase from Pseudomonas fluorescens (strain SBW25).